The primary structure comprises 81 residues: Putative membrane protein insertion efficiency factor (81 aa).

This sequence belongs to the UPF0161 family.

It is found in the cell membrane. In terms of biological role, could be involved in insertion of integral membrane proteins into the membrane. This chain is Putative membrane protein insertion efficiency factor, found in Geobacillus kaustophilus (strain HTA426).